A 393-amino-acid chain; its full sequence is Phosphopentomutase (393 aa).

Mn(2+)-binding residues include Asp14, Asp287, His292, Asp328, His329, and His340.

This sequence belongs to the phosphopentomutase family. Mn(2+) is required as a cofactor.

It localises to the cytoplasm. The catalysed reaction is 2-deoxy-alpha-D-ribose 1-phosphate = 2-deoxy-D-ribose 5-phosphate. It carries out the reaction alpha-D-ribose 1-phosphate = D-ribose 5-phosphate. The protein operates within carbohydrate degradation; 2-deoxy-D-ribose 1-phosphate degradation; D-glyceraldehyde 3-phosphate and acetaldehyde from 2-deoxy-alpha-D-ribose 1-phosphate: step 1/2. Functionally, isomerase that catalyzes the conversion of deoxy-ribose 1-phosphate (dRib-1-P) and ribose 1-phosphate (Rib-1-P) to deoxy-ribose 5-phosphate (dRib-5-P) and ribose 5-phosphate (Rib-5-P), respectively. This Geobacillus stearothermophilus (Bacillus stearothermophilus) protein is Phosphopentomutase.